We begin with the raw amino-acid sequence, 497 residues long: MEKKYILALDQGTTSSRAMIIDEEGEVIGVAQEEFDQIFPKPGWVEHSANEIWASILAVIAGVLLKTNISSKEIAGIGITNQRETTVIWDKESGNPIYNAIVWQSRQTEDICKQLRKDGYEDTIRSKTGLLIDPYFAGTKARWILDHVDGAQERAEKGELLFGTIDTWLVWKLTGGRAHITDYSNASRTLLYNIYDLEWDDELLKMLNIPRAMLPEVRPSSEVYADTVPYHFFGEEVPVAGIAGDQQAALFGQGCFEKGMAKNTYGTGCFLLMNTGEKAVRSENGLLTTLAWGLDGKVEYALEGSIFVAGSAIQWLRDGLRMVRQSSDSENYASRIESSDGVYVVPAFVGLGAPYWDSDVRGAVFGLTRGTEKEQFIRATLESLAYQTRDVLYAMEQDSGISLKTLRVDGGASANNFLMQFQSDILGVPVERPENKETTVLGAAFLAGLAVGVWKDKNEIKKHWKLDKRFEVEMKDDQREDLYEGWHKAVKAAQAFK.

Thr-13 contributes to the ADP binding site. 3 residues coordinate ATP: Thr-13, Thr-14, and Ser-15. Thr-13 is a sn-glycerol 3-phosphate binding site. Arg-17 contacts ADP. Positions 83, 84, and 135 each coordinate sn-glycerol 3-phosphate. Positions 83, 84, and 135 each coordinate glycerol. Phosphohistidine; by HPr is present on His-231. Asp-245 contacts sn-glycerol 3-phosphate. Glycerol contacts are provided by Asp-245 and Gln-246. Residues Thr-267 and Gly-310 each coordinate ADP. ATP-binding residues include Thr-267, Gly-310, Gln-314, and Gly-411. ADP contacts are provided by Gly-411 and Asn-415.

Belongs to the FGGY kinase family. As to quaternary structure, homotetramer and homodimer (in equilibrium). The phosphoenolpyruvate-dependent sugar phosphotransferase system (PTS), including enzyme I, and histidine-containing protein (HPr) are required for the phosphorylation, which leads to the activation of the enzyme.

It carries out the reaction glycerol + ATP = sn-glycerol 3-phosphate + ADP + H(+). It functions in the pathway polyol metabolism; glycerol degradation via glycerol kinase pathway; sn-glycerol 3-phosphate from glycerol: step 1/1. With respect to regulation, activated by phosphorylation and inhibited by fructose 1,6-bisphosphate (FBP). In terms of biological role, key enzyme in the regulation of glycerol uptake and metabolism. Catalyzes the phosphorylation of glycerol to yield sn-glycerol 3-phosphate. This Listeria innocua serovar 6a (strain ATCC BAA-680 / CLIP 11262) protein is Glycerol kinase.